The sequence spans 362 residues: Phosphoserine aminotransferase (362 aa).

Position 42 (R42) interacts with L-glutamate. Pyridoxal 5'-phosphate-binding positions include 76–77 (AR), W102, T153, D174, and Q197. Residue K198 is modified to N6-(pyridoxal phosphate)lysine. 239 to 240 (NT) contacts pyridoxal 5'-phosphate.

This sequence belongs to the class-V pyridoxal-phosphate-dependent aminotransferase family. SerC subfamily. As to quaternary structure, homodimer. The cofactor is pyridoxal 5'-phosphate.

Its subcellular location is the cytoplasm. It carries out the reaction O-phospho-L-serine + 2-oxoglutarate = 3-phosphooxypyruvate + L-glutamate. It catalyses the reaction 4-(phosphooxy)-L-threonine + 2-oxoglutarate = (R)-3-hydroxy-2-oxo-4-phosphooxybutanoate + L-glutamate. It functions in the pathway amino-acid biosynthesis; L-serine biosynthesis; L-serine from 3-phospho-D-glycerate: step 2/3. Its pathway is cofactor biosynthesis; pyridoxine 5'-phosphate biosynthesis; pyridoxine 5'-phosphate from D-erythrose 4-phosphate: step 3/5. Functionally, catalyzes the reversible conversion of 3-phosphohydroxypyruvate to phosphoserine and of 3-hydroxy-2-oxo-4-phosphonooxybutanoate to phosphohydroxythreonine. This is Phosphoserine aminotransferase from Proteus mirabilis (strain HI4320).